Here is a 199-residue protein sequence, read N- to C-terminus: Probable GTP-binding protein EngB (199 aa).

An EngB-type G domain is found at 28 to 199 (DLPEIALAGR…ESWDTILEYL (172 aa)). GTP contacts are provided by residues 36 to 43 (GRSNVGKS), 63 to 67 (GKTQL), 81 to 84 (DVPG), 148 to 151 (TKAD), and 180 to 182 (FSS). 2 residues coordinate Mg(2+): Ser43 and Thr65.

It belongs to the TRAFAC class TrmE-Era-EngA-EngB-Septin-like GTPase superfamily. EngB GTPase family. Requires Mg(2+) as cofactor.

In terms of biological role, necessary for normal cell division and for the maintenance of normal septation. The polypeptide is Probable GTP-binding protein EngB (Streptococcus equi subsp. equi (strain 4047)).